We begin with the raw amino-acid sequence, 416 residues long: Putative F-box/kelch-repeat protein At1g12870 (416 aa).

The region spanning 27 to 76 is the F-box domain; it reads MIASSSLPDDVVEEIFLKLPVKALMRFKSLSKQWRSTLESCYFSQRHLKI. Kelch repeat units follow at residues 199-243 and 297-341; these read LVWL…PASA and CMYE…HVLD.

This Arabidopsis thaliana (Mouse-ear cress) protein is Putative F-box/kelch-repeat protein At1g12870.